The sequence spans 163 residues: Cyclic pyranopterin monophosphate synthase (163 aa).

Substrate is bound by residues Leu75–His77 and Met113–Glu114. Asp128 is a catalytic residue.

It belongs to the MoaC family. In terms of assembly, homohexamer; trimer of dimers.

It catalyses the reaction (8S)-3',8-cyclo-7,8-dihydroguanosine 5'-triphosphate = cyclic pyranopterin phosphate + diphosphate. Its pathway is cofactor biosynthesis; molybdopterin biosynthesis. Catalyzes the conversion of (8S)-3',8-cyclo-7,8-dihydroguanosine 5'-triphosphate to cyclic pyranopterin monophosphate (cPMP). In Magnetococcus marinus (strain ATCC BAA-1437 / JCM 17883 / MC-1), this protein is Cyclic pyranopterin monophosphate synthase.